We begin with the raw amino-acid sequence, 176 residues long: ATP-dependent protease subunit HslV (176 aa).

The active site involves Thr2. Positions 157, 160, and 163 each coordinate Na(+).

This sequence belongs to the peptidase T1B family. HslV subfamily. A double ring-shaped homohexamer of HslV is capped on each side by a ring-shaped HslU homohexamer. The assembly of the HslU/HslV complex is dependent on binding of ATP.

The protein resides in the cytoplasm. The catalysed reaction is ATP-dependent cleavage of peptide bonds with broad specificity.. Its activity is regulated as follows. Allosterically activated by HslU binding. Functionally, protease subunit of a proteasome-like degradation complex believed to be a general protein degrading machinery. The polypeptide is ATP-dependent protease subunit HslV (Escherichia coli O45:K1 (strain S88 / ExPEC)).